We begin with the raw amino-acid sequence, 499 residues long: MSDLHHLSIAKLVDGLQNQHFSSVELTDHFLKRINTLDKKVNSFITIDEEGARQAAQQADDRRSAGDNSVLLGLPMAHKDLFCTKGLLTTSGSKILHNFVSPYDATIVSNIREAGAVCLGKLNMDEFAMGSDNESSYYGAVHNPWDLSRVPGGSSGGSAAAVAAGFVPFATGSDTGGSIRQPASFCGLTGIKPTYGRVSRFGMIAYASSLDQAGTFGRSAQDCAYLLQPMAGHDARDATSIKRDVPDYVADLQSAAAQADADKPFSGLRIGVAKEYFGKGLDAEVDANVRAALKQYEELGATIVEVNITDPEITLATYYMLAPAEASSNLSRFDGVRFGYRCEDPKDLADLYTRSRSEGFGVEVQRRILMGTYALSAGYFDAYYTKAQKVRRLILQDFKNAFEKCDVIASPTAPTAAYKLDAALDPVTMYLGDVYTIGVNLAGLPAISMPAGFTESGLPIGLQLIGNHWDDSKLLSTAHIFQQHTDHHTKLSATAQESI.

Active-site charge relay system residues include lysine 79 and serine 154. Residue serine 178 is the Acyl-ester intermediate of the active site.

The protein belongs to the amidase family. GatA subfamily. In terms of assembly, heterotrimer of A, B and C subunits.

The enzyme catalyses L-glutamyl-tRNA(Gln) + L-glutamine + ATP + H2O = L-glutaminyl-tRNA(Gln) + L-glutamate + ADP + phosphate + H(+). Allows the formation of correctly charged Gln-tRNA(Gln) through the transamidation of misacylated Glu-tRNA(Gln) in organisms which lack glutaminyl-tRNA synthetase. The reaction takes place in the presence of glutamine and ATP through an activated gamma-phospho-Glu-tRNA(Gln). The protein is Glutamyl-tRNA(Gln) amidotransferase subunit A of Psychrobacter sp. (strain PRwf-1).